Here is a 158-residue protein sequence, read N- to C-terminus: Transcription elongation factor GreA (158 aa).

Residues 49–73 (QAAREQQGFIEGRIKEIEAKLANAQ) are a coiled coil.

It belongs to the GreA/GreB family.

In terms of biological role, necessary for efficient RNA polymerase transcription elongation past template-encoded arresting sites. The arresting sites in DNA have the property of trapping a certain fraction of elongating RNA polymerases that pass through, resulting in locked ternary complexes. Cleavage of the nascent transcript by cleavage factors such as GreA or GreB allows the resumption of elongation from the new 3'terminus. GreA releases sequences of 2 to 3 nucleotides. The sequence is that of Transcription elongation factor GreA from Methylococcus capsulatus (strain ATCC 33009 / NCIMB 11132 / Bath).